A 605-amino-acid chain; its full sequence is Dolichyl-diphosphooligosaccharide--protein glycosyltransferase subunit 1 (605 aa).

The signal sequence occupies residues 1–22 (MEAPIVLLLLLWLALAPTPGSA). At 23-437 (SSEAPPLVNE…FNKVLMLQEP (415 aa)) the chain is on the lumenal side. Position 185 is an N6-acetyllysine (Lys-185). N-linked (GlcNAc...) asparagine glycosylation is present at Asn-297. Residues 438 to 455 (LLVVAAFYILFFTVIIYV) form a helical membrane-spanning segment. Over 456–605 (RLDFSITKDP…TKIDHILDAL (150 aa)) the chain is Cytoplasmic. An N6-acetyllysine; alternate modification is found at Lys-536. A Glycyl lysine isopeptide (Lys-Gly) (interchain with G-Cter in SUMO2); alternate cross-link involves residue Lys-536.

Belongs to the OST1 family. In terms of assembly, component of the oligosaccharyltransferase (OST) complex. OST exists in two different complex forms which contain common core subunits RPN1, RPN2, OST48, OST4, DAD1 and TMEM258, either STT3A or STT3B as catalytic subunits, and form-specific accessory subunits. STT3A complex assembly occurs through the formation of 3 subcomplexes. Subcomplex 1 contains RPN1 and TMEM258, subcomplex 2 contains the STT3A-specific subunits STT3A, DC2/OSTC, and KCP2 as well as the core subunit OST4, and subcomplex 3 contains RPN2, DAD1, and OST48. The STT3A complex can form stable complexes with the Sec61 complex or with both the Sec61 and TRAP complexes. Interacts with TMEM35A/NACHO. In terms of processing, ubiquitinated by the ECS(ASB11) complex. Post-translationally, ufmylated by UFL1 in response to endoplasmic reticulum stress, promoting reticulophagy of endoplasmic reticulum sheets. As to expression, expressed in all tissues tested.

The protein resides in the endoplasmic reticulum membrane. It functions in the pathway protein modification; protein glycosylation. Its function is as follows. Subunit of the oligosaccharyl transferase (OST) complex that catalyzes the initial transfer of a defined glycan (Glc(3)Man(9)GlcNAc(2) in eukaryotes) from the lipid carrier dolichol-pyrophosphate to an asparagine residue within an Asn-X-Ser/Thr consensus motif in nascent polypeptide chains, the first step in protein N-glycosylation. N-glycosylation occurs cotranslationally and the complex associates with the Sec61 complex at the channel-forming translocon complex that mediates protein translocation across the endoplasmic reticulum (ER). All subunits are required for a maximal enzyme activity. This Rattus norvegicus (Rat) protein is Dolichyl-diphosphooligosaccharide--protein glycosyltransferase subunit 1.